The sequence spans 475 residues: Endoglucanase A (475 aa).

The signal sequence occupies residues Met1 to Ala26. The active site involves His147. The Proton donor role is filled by Glu195. The Nucleophile role is filled by Glu332. The 66-residue stretch at Pro409 to Ser474 folds into the Dockerin domain.

Belongs to the glycosyl hydrolase 5 (cellulase A) family.

The enzyme catalyses Endohydrolysis of (1-&gt;4)-beta-D-glucosidic linkages in cellulose, lichenin and cereal beta-D-glucans.. Functionally, the biological conversion of cellulose to glucose generally requires three types of hydrolytic enzymes: (1) Endoglucanases which cut internal beta-1,4-glucosidic bonds; (2) Exocellobiohydrolases that cut the disaccharide cellobiose from the non-reducing end of the cellulose polymer chain; (3) Beta-1,4-glucosidases which hydrolyze the cellobiose and other short cello-oligosaccharides to glucose. In Ruminiclostridium cellulolyticum (strain ATCC 35319 / DSM 5812 / JCM 6584 / H10) (Clostridium cellulolyticum), this protein is Endoglucanase A (celCCA).